The following is a 970-amino-acid chain: Villin-3 (970 aa).

Gelsolin-like repeat units follow at residues 31–111 (AVPV…ERFL), 151–219 (TVHV…EDGK), 273–339 (VLTR…TVIF), 416–484 (KFYS…PAEF), 536–576 (AIQV…QELA), and 643–714 (NFTQ…PQFF). The segment at 741–908 (DGVKPKLDKP…EGQPENEEGL (168 aa)) is disordered. Residues 755-778 (TTSSSHTGRSSVPEKSQRSRSMSF) are compositionally biased toward polar residues. The segment covering 833–842 (AASIAAISAS) has biased composition (low complexity). The span at 878 to 893 (KDSTPSKDSPTVTPTI) shows a compositional bias: polar residues. One can recognise an HP domain in the interval 905 to 970 (EEGLPVYPYE…NRLKIALQLF (66 aa)).

The protein belongs to the villin/gelsolin family. Expressed in roots, young leaves, and inflorescences, mostly in the vasculature of roots, leaves, and filaments of the anthers and in epidermal cells of the elongation zone and root hairs. Also detected in guard cells.

Its subcellular location is the cytoplasm. It localises to the cytoskeleton. In terms of biological role, ca(2+)-regulated actin-binding protein. Binds actin microfilaments (MFs). Involved in actin filament bundling, severing and capping. Caps the barbed end of actin filaments and is able to sever them in a calcium-dependent manner. MF severing is promoted by VLN1. This Oryza sativa subsp. japonica (Rice) protein is Villin-3.